The sequence spans 246 residues: Transcription factor A, mitochondrial (246 aa).

Residues 1 to 42 (MAFLRSMWGVLSALGRSGAELCTGCGSRLRSPFSFVYLPRWF) constitute a mitochondrion transit peptide. The segment at residues 50–118 (PKKPVSSYLR…VYKEEISRFK (69 aa)) is a DNA-binding region (HMG box 1). Serine 55, serine 56, and serine 61 each carry phosphoserine; by PKA. Phosphothreonine is present on threonine 122. Positions 155-219 (PKRPRSAYNV…RYHNEMKSWE (65 aa)) form a DNA-binding region, HMG box 2. Serine 160 carries the phosphoserine; by PKA modification. A phosphoserine mark is found at serine 193 and serine 195.

In terms of assembly, monomer; binds DNA as a monomer. Homodimer. Component of the mitochondrial transcription initiation complex, composed at least of TFB2M, TFAM and POLRMT. In this complex TFAM recruits POLRMT to the promoter whereas TFB2M induces structural changes in POLRMT to enable promoter opening and trapping of the DNA non-template strand. Upon metabolic stress, forms a complex composed of FOXO3, SIRT3, TFAM and POLRMT. Interacts with TFB1M and TFB2M. Interacts with CLPX; this enhances DNA-binding. In terms of processing, phosphorylation by PKA within the HMG box 1 impairs DNA binding and promotes degradation by the AAA+ Lon protease.

It is found in the mitochondrion. It localises to the mitochondrion matrix. The protein localises to the mitochondrion nucleoid. Functionally, binds to the mitochondrial light strand promoter and functions in mitochondrial transcription regulation. Component of the mitochondrial transcription initiation complex, composed at least of TFB2M, TFAM and POLRMT that is required for basal transcription of mitochondrial DNA. In this complex, TFAM recruits POLRMT to a specific promoter whereas TFB2M induces structural changes in POLRMT to enable promoter opening and trapping of the DNA non-template strand. Required for accurate and efficient promoter recognition by the mitochondrial RNA polymerase. Promotes transcription initiation from the HSP1 and the light strand promoter by binding immediately upstream of transcriptional start sites. Is able to unwind DNA. Bends the mitochondrial light strand promoter DNA into a U-turn shape via its HMG boxes. Required for maintenance of normal levels of mitochondrial DNA. May play a role in organizing and compacting mitochondrial DNA. The chain is Transcription factor A, mitochondrial from Homo sapiens (Human).